The chain runs to 382 residues: Succinate--CoA ligase [ADP-forming] subunit beta (382 aa).

An ATP-grasp domain is found at 9-240; it reads KELFAKYGVK…PRDITEFEAY (232 aa). Residues K45, 52-54, L94, and E99 contribute to the ATP site; that span reads GRG. Residues N193 and D207 each contribute to the Mg(2+) site. Residues N260 and 317 to 319 contribute to the substrate site; that span reads GIT.

It belongs to the succinate/malate CoA ligase beta subunit family. As to quaternary structure, heterotetramer of two alpha and two beta subunits. It depends on Mg(2+) as a cofactor.

The catalysed reaction is succinate + ATP + CoA = succinyl-CoA + ADP + phosphate. It catalyses the reaction GTP + succinate + CoA = succinyl-CoA + GDP + phosphate. It functions in the pathway carbohydrate metabolism; tricarboxylic acid cycle; succinate from succinyl-CoA (ligase route): step 1/1. Succinyl-CoA synthetase functions in the citric acid cycle (TCA), coupling the hydrolysis of succinyl-CoA to the synthesis of either ATP or GTP and thus represents the only step of substrate-level phosphorylation in the TCA. The beta subunit provides nucleotide specificity of the enzyme and binds the substrate succinate, while the binding sites for coenzyme A and phosphate are found in the alpha subunit. This chain is Succinate--CoA ligase [ADP-forming] subunit beta, found in Pyrobaculum calidifontis (strain DSM 21063 / JCM 11548 / VA1).